The primary structure comprises 98 residues: Large ribosomal subunit protein eL21 (98 aa).

The tract at residues 1-24 is disordered; it reads MVKMSHGPRSGSRRKLTKSAEERK.

Belongs to the eukaryotic ribosomal protein eL21 family.

In Thermoplasma acidophilum (strain ATCC 25905 / DSM 1728 / JCM 9062 / NBRC 15155 / AMRC-C165), this protein is Large ribosomal subunit protein eL21 (rpl21e).